Reading from the N-terminus, the 212-residue chain is Kynurenine formamidase (212 aa).

Trp-18 provides a ligand contact to substrate. 3 residues coordinate Zn(2+): His-48, His-52, and Asp-54. Catalysis depends on His-58, which acts as the Proton donor/acceptor. Positions 160 and 172 each coordinate Zn(2+).

This sequence belongs to the Cyclase 1 superfamily. KynB family. Homodimer. Requires Zn(2+) as cofactor.

The catalysed reaction is N-formyl-L-kynurenine + H2O = L-kynurenine + formate + H(+). It functions in the pathway amino-acid degradation; L-tryptophan degradation via kynurenine pathway; L-kynurenine from L-tryptophan: step 2/2. In terms of biological role, catalyzes the hydrolysis of N-formyl-L-kynurenine to L-kynurenine, the second step in the kynurenine pathway of tryptophan degradation. The chain is Kynurenine formamidase from Paraburkholderia xenovorans (strain LB400).